A 931-amino-acid polypeptide reads, in one-letter code: Isoleucine--tRNA ligase (931 aa).

The 'HIGH' region signature appears at 58 to 68; sequence PYANGHLHCGH. E559 contacts L-isoleucyl-5'-AMP. The 'KMSKS' region motif lies at 600–604; that stretch reads KLSKS. K603 is an ATP binding site. Positions 894, 897, 914, and 917 each coordinate Zn(2+).

The protein belongs to the class-I aminoacyl-tRNA synthetase family. IleS type 1 subfamily. In terms of assembly, monomer. Requires Zn(2+) as cofactor.

The protein resides in the cytoplasm. The catalysed reaction is tRNA(Ile) + L-isoleucine + ATP = L-isoleucyl-tRNA(Ile) + AMP + diphosphate. Its function is as follows. Catalyzes the attachment of isoleucine to tRNA(Ile). As IleRS can inadvertently accommodate and process structurally similar amino acids such as valine, to avoid such errors it has two additional distinct tRNA(Ile)-dependent editing activities. One activity is designated as 'pretransfer' editing and involves the hydrolysis of activated Val-AMP. The other activity is designated 'posttransfer' editing and involves deacylation of mischarged Val-tRNA(Ile). The protein is Isoleucine--tRNA ligase of Legionella pneumophila (strain Paris).